Consider the following 316-residue polypeptide: tRNA dimethylallyltransferase (316 aa).

17-24 contributes to the ATP binding site; the sequence is GPTASGKT. 19 to 24 is a binding site for substrate; that stretch reads TASGKT. Interaction with substrate tRNA stretches follow at residues 42–45, 166–170, 247–252, and 280–287; these read DSAL, QRLSR, RCVGYR, and KRQITWLR.

The protein belongs to the IPP transferase family. In terms of assembly, monomer. Requires Mg(2+) as cofactor.

The enzyme catalyses adenosine(37) in tRNA + dimethylallyl diphosphate = N(6)-dimethylallyladenosine(37) in tRNA + diphosphate. Its function is as follows. Catalyzes the transfer of a dimethylallyl group onto the adenine at position 37 in tRNAs that read codons beginning with uridine, leading to the formation of N6-(dimethylallyl)adenosine (i(6)A). The polypeptide is tRNA dimethylallyltransferase (Escherichia coli O45:K1 (strain S88 / ExPEC)).